The primary structure comprises 192 residues: Secreted and transmembrane protein 1A (192 aa).

Positions 1-27 (MMTCPSVPAIPTLWLFSILLLVVSLNA) are cleaved as a signal peptide. Topologically, residues 28 to 165 (QNKSWDNPIC…SSPIEGKPGT (138 aa)) are extracellular. N29, N55, N84, and N127 each carry an N-linked (GlcNAc...) asparagine glycan. Residues 166 to 186 (LVGVITVIFILGVAGFITFIY) traverse the membrane as a helical segment. Topologically, residues 187 to 192 (YRHRRS) are cytoplasmic.

Belongs to the SECTM family.

The protein resides in the cell membrane. The protein localises to the secreted. The chain is Secreted and transmembrane protein 1A from Mus musculus (Mouse).